We begin with the raw amino-acid sequence, 511 residues long: Alpha-amylase 1 (511 aa).

The first 15 residues, 1–15 (MKFFLLLSLIGFCWA), serve as a signal peptide directing secretion. Glutamine 16 bears the Pyrrolidone carboxylic acid mark. 3 cysteine pairs are disulfide-bonded: cysteine 43-cysteine 101, cysteine 85-cysteine 130, and cysteine 156-cysteine 175. Positions 115, 173, and 182 each coordinate Ca(2+). Arginine 210 is a chloride binding site. Aspartate 212 serves as the catalytic Nucleophile. A Ca(2+)-binding site is contributed by histidine 216. Catalysis depends on glutamate 248, which acts as the Proton donor. Chloride-binding residues include asparagine 313 and arginine 352. 2 cysteine pairs are disulfide-bonded: cysteine 393/cysteine 399 and cysteine 465/cysteine 477.

Belongs to the glycosyl hydrolase 13 family. As to quaternary structure, monomer. Requires Ca(2+) as cofactor. Chloride is required as a cofactor. As to expression, expressed in liver and saliva.

The protein resides in the secreted. It carries out the reaction Endohydrolysis of (1-&gt;4)-alpha-D-glucosidic linkages in polysaccharides containing three or more (1-&gt;4)-alpha-linked D-glucose units.. The sequence is that of Alpha-amylase 1 (Amy1) from Mus musculus (Mouse).